Consider the following 700-residue polypeptide: Polyribonucleotide nucleotidyltransferase (700 aa).

Mg(2+) contacts are provided by D484 and D490. The region spanning 551–610 (PRVIRMVVDPEKIREIIGPGGKTISKIIAETGVKIDIEEDGRLYITASDLRSGERAKQMI) is the KH domain. The S1 motif domain occupies 620 to 688 (GEIYLGKVLR…KLGRISLSRK (69 aa)).

It belongs to the polyribonucleotide nucleotidyltransferase family. Mg(2+) serves as cofactor.

The protein resides in the cytoplasm. It catalyses the reaction RNA(n+1) + phosphate = RNA(n) + a ribonucleoside 5'-diphosphate. Involved in mRNA degradation. Catalyzes the phosphorolysis of single-stranded polyribonucleotides processively in the 3'- to 5'-direction. This chain is Polyribonucleotide nucleotidyltransferase, found in Thermoanaerobacter pseudethanolicus (strain ATCC 33223 / 39E) (Clostridium thermohydrosulfuricum).